The primary structure comprises 979 residues: Translation initiation factor IF-2 (979 aa).

The disordered stretch occupies residues 33–391; it reads VKSHSSTITT…TPPAEITLTE (359 aa). Composition is skewed to low complexity over residues 54–63 and 139–150; these read QKRPQAPKAQ and AKTTSPKAEPAA. A compositionally biased stretch (pro residues) spans 151 to 166; the sequence is PAAPKPKLMGPPPRPT. The span at 234–252 shows a compositional bias: acidic residues; the sequence is PELDEEPDTNNVEGDDDAT. Basic residues-rich tracts occupy residues 263 to 278 and 294 to 303; these read PAAK…PSKR and TKTSKLKRRP. Residues 314–328 show a composition bias toward polar residues; that stretch reads GTTTNNNAEVPSVSL. Basic and acidic residues predominate over residues 371-380; it reads KEQRRDRPDV. Positions 468–641 constitute a tr-type G domain; it reads HRPPVVTIMG…LLVSEIEELS (174 aa). The G1 stretch occupies residues 477–484; it reads GHVDHGKT. 477–484 contributes to the GTP binding site; it reads GHVDHGKT. The G2 stretch occupies residues 502-506; it reads GITQH. Residues 527–530 are G3; that stretch reads DTPG. GTP contacts are provided by residues 527–531 and 581–584; these read DTPGH and NKMD. Positions 581-584 are G4; it reads NKMD. The G5 stretch occupies residues 617-619; the sequence is SAL.

It belongs to the TRAFAC class translation factor GTPase superfamily. Classic translation factor GTPase family. IF-2 subfamily.

Its subcellular location is the cytoplasm. In terms of biological role, one of the essential components for the initiation of protein synthesis. Protects formylmethionyl-tRNA from spontaneous hydrolysis and promotes its binding to the 30S ribosomal subunits. Also involved in the hydrolysis of GTP during the formation of the 70S ribosomal complex. The chain is Translation initiation factor IF-2 from Picosynechococcus sp. (strain ATCC 27264 / PCC 7002 / PR-6) (Agmenellum quadruplicatum).